The sequence spans 370 residues: Spermidine/putrescine import ATP-binding protein PotA 1 (370 aa).

Residues 12–250 form the ABC transporter domain; that stretch reads VSIRAVRKVY…PGNRFVADFI (239 aa). Position 48 to 55 (48 to 55) interacts with ATP; that stretch reads GPSGCGKT.

The protein belongs to the ABC transporter superfamily. Spermidine/putrescine importer (TC 3.A.1.11.1) family. As to quaternary structure, the complex is composed of two ATP-binding proteins (PotA), two transmembrane proteins (PotB and PotC) and a solute-binding protein (PotD).

Its subcellular location is the cell inner membrane. It catalyses the reaction ATP + H2O + polyamine-[polyamine-binding protein]Side 1 = ADP + phosphate + polyamineSide 2 + [polyamine-binding protein]Side 1.. Its function is as follows. Part of the ABC transporter complex PotABCD involved in spermidine/putrescine import. Responsible for energy coupling to the transport system. In Pseudomonas aeruginosa (strain ATCC 15692 / DSM 22644 / CIP 104116 / JCM 14847 / LMG 12228 / 1C / PRS 101 / PAO1), this protein is Spermidine/putrescine import ATP-binding protein PotA 1.